We begin with the raw amino-acid sequence, 122 residues long: MIQMQSILEVADNSGAKKVMCIKVLGGSHHMVAKLGDVIVVSVKEAIPGGKVKKGDVYKGVIVRTKTGVVRPDGSTIKFDKNALVLLNKQDEPIGTRVFGPVTRELRAKKYVRIMSLAEEVL.

Belongs to the universal ribosomal protein uL14 family. In terms of assembly, part of the 50S ribosomal subunit. Forms a cluster with proteins L3 and L19. In the 70S ribosome, L14 and L19 interact and together make contacts with the 16S rRNA in bridges B5 and B8.

Binds to 23S rRNA. Forms part of two intersubunit bridges in the 70S ribosome. The protein is Large ribosomal subunit protein uL14 of Rickettsia felis (strain ATCC VR-1525 / URRWXCal2) (Rickettsia azadi).